Reading from the N-terminus, the 388-residue chain is Acyl-[acyl-carrier-protein] dehydrogenase MbtN (388 aa).

The protein belongs to the acyl-CoA dehydrogenase family. It depends on FAD as a cofactor.

It functions in the pathway siderophore biosynthesis; mycobactin biosynthesis. In terms of biological role, catalyzes the dehydrogenation at the alpha-beta position of ACP-bound acyl chains. This results in the introduction of a double bond in the lipidic chain, which is further transferred to the epsilon-amino group of lysine residue in the mycobactin core by MbtK. The protein is Acyl-[acyl-carrier-protein] dehydrogenase MbtN (mbtN) of Mycolicibacterium paratuberculosis (strain ATCC BAA-968 / K-10) (Mycobacterium paratuberculosis).